The primary structure comprises 234 residues: Coiled-coil domain-containing protein 194 (234 aa).

The first 43 residues, 1 to 43, serve as a signal peptide directing secretion; it reads MAEPGPEPGRAWRLLALCGAAVFLAAAAAGGALVAWNLAASTA. A disordered region spans residues 44-63; it reads RSPRCPEPEQMNATVRPPDS. Residues 67-171 are a coiled coil; that stretch reads VEELRRRLAE…LQRAGAAEAA (105 aa). A disordered region spans residues 194–234; that stretch reads GTLRKESRLRPRSGSRTKPSISHRPKSGSTKGCRRPPRDPQ. Over residues 203–219 the composition is skewed to basic residues; it reads RPRSGSRTKPSISHRPK.

This Mus musculus (Mouse) protein is Coiled-coil domain-containing protein 194.